A 144-amino-acid polypeptide reads, in one-letter code: Vasopressin-neurophysin 2-copeptin (144 aa).

Residues Cys-1 and Cys-6 are joined by a disulfide bond. Gly-9 carries the post-translational modification Glycine amide. Intrachain disulfides connect Cys-22-Cys-66, Cys-25-Cys-39, Cys-33-Cys-56, Cys-40-Cys-46, Cys-73-Cys-85, Cys-79-Cys-97, and Cys-86-Cys-91. Asn-112 carries an N-linked (GlcNAc...) asparagine glycan.

It belongs to the vasopressin/oxytocin family. As to quaternary structure, interacts with vasopressin receptors V1bR/AVPR1B (Ki=85 pM), V1aR/AVPR1A (Ki=0.6 nM) and V2R/AVPR2 (Ki=4.9 nM). Interacts with oxytocin receptor (OXTR) (Ki=110 nM).

Its subcellular location is the secreted. Its function is as follows. Neurophysin 2 specifically binds vasopressin. In terms of biological role, vasopressin has a direct antidiuretic action on the kidney, it also causes vasoconstriction of the peripheral vessels. Acts by binding to vasopressin receptors (V1bR/AVPR1B, V1aR/AVPR1A, and V2R/AVPR2). The chain is Vasopressin-neurophysin 2-copeptin (AVP) from Cavia porcellus (Guinea pig).